The chain runs to 471 residues: U1 small nuclear ribonucleoprotein 70 kDa (471 aa).

The tract at residues 48–78 (FEDPRDAPPPTRAETREERMERKRREKIERR) is disordered. Residues 60–78 (AETREERMERKRREKIERR) show a composition bias toward basic and acidic residues. Residues 92–202 (HNDQNAQGDA…GGGLGGTRRG (111 aa)) are required for interaction with U1 RNA. The RRM domain maps to 103-184 (KTLFVARVNY…LVDVERGRTV (82 aa)). Residues 187-471 (WRPRRLGGGL…NGYMMEPPME (285 aa)) form a disordered region. Residues 192–201 (LGGGLGGTRR) show a composition bias toward gly residues. Residues 207–245 (NIRHSGRDDTSRYDERDRDRERERDRRERSRERDKERER) are compositionally biased toward basic and acidic residues. The span at 246–259 (RRSRSRERRRRSRS) shows a compositional bias: basic residues. Residues 260–293 (REKEERKRSRERSRDKDKDKDKDKDKEKDKDKDR) show a composition bias toward basic and acidic residues. A compositionally biased stretch (basic residues) spans 294 to 303 (DRKRRSRSRE). Composition is skewed to basic and acidic residues over residues 304-321 (RKRERDRDREKKEDRVEG) and 344-428 (IELK…ERVP).

In terms of assembly, component of the U1 snRNP. The U1 snRNP is composed of the U1 snRNA and the 7 core Sm proteins snrpb, snrpd1, snrpd2, snrpd3, snrpe, snrpf and snrpg that assemble in a heptameric protein ring on the Sm site of the small nuclear RNA to form the core snRNP, and at least three U1 snRNP-specific proteins snrnp70/U1-70K, snrpa/U1-A and snrpc/U1-C.

It localises to the nucleus speckle. Its subcellular location is the nucleus. The protein localises to the nucleoplasm. Component of the spliceosomal U1 snRNP, which is essential for recognition of the pre-mRNA 5' splice-site and the subsequent assembly of the spliceosome. snrnp70 binds to the loop I region of U1-snRNA. The polypeptide is U1 small nuclear ribonucleoprotein 70 kDa (snrnp70) (Xenopus tropicalis (Western clawed frog)).